The following is a 112-amino-acid chain: Large ribosomal subunit protein eL33w (112 aa).

Belongs to the eukaryotic ribosomal protein eL33 family.

The polypeptide is Large ribosomal subunit protein eL33w (RPL35AA) (Arabidopsis thaliana (Mouse-ear cress)).